The primary structure comprises 242 residues: Protein LST7 (242 aa).

A uDENN FLCN/SMCR8-type domain is found at 48 to 212 (SCLLQFPEES…NKSKFGRNLV (165 aa)).

Its function is as follows. Required for the nitrogen-regulated transport of amino acid permeases GAP1 and PUT4 from the Golgi to the cell surface. The sequence is that of Protein LST7 (LST7) from Saccharomyces cerevisiae (strain ATCC 204508 / S288c) (Baker's yeast).